The following is an 83-amino-acid chain: Small ribosomal subunit protein bS20 (83 aa).

This sequence belongs to the bacterial ribosomal protein bS20 family.

Binds directly to 16S ribosomal RNA. This chain is Small ribosomal subunit protein bS20, found in Staphylococcus carnosus (strain TM300).